The chain runs to 285 residues: 2-dehydro-3-deoxyphosphooctonate aldolase (285 aa).

It belongs to the KdsA family.

Its subcellular location is the cytoplasm. The enzyme catalyses D-arabinose 5-phosphate + phosphoenolpyruvate + H2O = 3-deoxy-alpha-D-manno-2-octulosonate-8-phosphate + phosphate. The protein operates within carbohydrate biosynthesis; 3-deoxy-D-manno-octulosonate biosynthesis; 3-deoxy-D-manno-octulosonate from D-ribulose 5-phosphate: step 2/3. It functions in the pathway bacterial outer membrane biogenesis; lipopolysaccharide biosynthesis. The sequence is that of 2-dehydro-3-deoxyphosphooctonate aldolase from Bordetella parapertussis (strain 12822 / ATCC BAA-587 / NCTC 13253).